The following is a 476-amino-acid chain: MDAVAFEDVAVNFTQEEWALLGPSQKNLYRYVMQETIRNLDCIRMIWEEQNTEDQYKNPRRNLRCHMVERFSESKDSSQCGETFSLIRDSIVNNSICPGEDPCQSAECEEVIMGHLSLNSHIRVDSGHKPHEYQEYGEKPHTHKQRGKAFSYHHSFQSRGRPHTGKKRYECKECGKTFSSRRNLRRHMVVQGGNRPYKCKLCGKAFFWPSLLRMHERTHTGEKPYECKQCSKAFPFYSSYRRHERMHTGEKPYECKQCSKALPDSSSYIRHERTHTGEKPYTCKQCGKAFSVSSSLRRHETTHSAEKPYECKQCGKTFHHLGSFQIHMKRHTGDRPHKCKICGKGFDRPSLVRYHERIHTGEKPYECKQCGKTLSHSSSFRRHMIMHTGGGPHKCKICGKAFVYPSVCQRHEKSHSGEKPYECKQCGKALSHSSSFRRHMVMHTGDGPNKCKVCGKAFVYPSVCQRHEKTHWRETI.

Residues 4–96 (VAFEDVAVNF…IRDSIVNNSI (93 aa)) enclose the KRAB domain. The segment at 101 to 125 (DPCQSAECEEVIMGHLSLNSHIRVD) adopts a C2H2-type 1; degenerate zinc-finger fold. Residues 169-191 (YECKECGKTFSSRRNLRRHMVVQ) form a C2H2-type 2; degenerate zinc finger. 10 consecutive C2H2-type zinc fingers follow at residues 197 to 219 (YKCK…ERTH), 225 to 247 (YECK…ERMH), 253 to 275 (YECK…ERTH), 281 to 303 (YTCK…ETTH), 309 to 331 (YECK…MKRH), 337 to 359 (HKCK…ERIH), 365 to 387 (YECK…MIMH), 393 to 415 (HKCK…EKSH), 421 to 443 (YECK…MVMH), and 449 to 471 (NKCK…EKTH).

This sequence belongs to the krueppel C2H2-type zinc-finger protein family.

Its subcellular location is the nucleus. Functionally, may be involved in transcriptional regulation. The protein is Zinc finger protein 563 (ZNF563) of Homo sapiens (Human).